Consider the following 408-residue polypeptide: LL-diaminopimelate aminotransferase (408 aa).

Residues tyrosine 15 and glycine 42 each contribute to the substrate site. Pyridoxal 5'-phosphate contacts are provided by residues tyrosine 72, 108–109 (SK), tyrosine 132, asparagine 187, tyrosine 218, and 246–248 (SFS). Substrate contacts are provided by lysine 109, tyrosine 132, and asparagine 187. Lysine 249 bears the N6-(pyridoxal phosphate)lysine mark. 2 residues coordinate pyridoxal 5'-phosphate: arginine 257 and asparagine 292. Positions 292 and 388 each coordinate substrate.

Belongs to the class-I pyridoxal-phosphate-dependent aminotransferase family. LL-diaminopimelate aminotransferase subfamily. In terms of assembly, homodimer. The cofactor is pyridoxal 5'-phosphate.

It catalyses the reaction (2S,6S)-2,6-diaminopimelate + 2-oxoglutarate = (S)-2,3,4,5-tetrahydrodipicolinate + L-glutamate + H2O + H(+). Its pathway is amino-acid biosynthesis; L-lysine biosynthesis via DAP pathway; LL-2,6-diaminopimelate from (S)-tetrahydrodipicolinate (aminotransferase route): step 1/1. Functionally, involved in the synthesis of meso-diaminopimelate (m-DAP or DL-DAP), required for both lysine and peptidoglycan biosynthesis. Catalyzes the direct conversion of tetrahydrodipicolinate to LL-diaminopimelate. The polypeptide is LL-diaminopimelate aminotransferase (Leptospira biflexa serovar Patoc (strain Patoc 1 / Ames)).